The chain runs to 259 residues: 3'-5' ssDNA/RNA exonuclease TatD (259 aa).

A divalent metal cation-binding residues include Glu-92, His-128, and His-153.

The protein belongs to the metallo-dependent hydrolases superfamily. TatD-type hydrolase family. TatD subfamily. In terms of assembly, monomer. The cofactor is Mg(2+).

The protein localises to the cytoplasm. Functionally, 3'-5' exonuclease that prefers single-stranded DNA and RNA. May play a role in the H(2)O(2)-induced DNA damage repair. The protein is 3'-5' ssDNA/RNA exonuclease TatD of Erwinia tasmaniensis (strain DSM 17950 / CFBP 7177 / CIP 109463 / NCPPB 4357 / Et1/99).